The primary structure comprises 123 residues: SGSCTTKTCWTTLPPFRLVGNILKQKYEKPVQVEPVRARRTRRPAFLKIKDIKNFKKPRPTDMVYLQRSPNYCDRDPRVGSLGTVGRQCNRTSIGTDSCDLMCCGRGYNTHQYTRIWQCNCKF.

Ser1 carries O-palmitoleoyl serine; by PORCN lipidation. Residues Cys89 and Cys104 are joined by a disulfide bond. N-linked (GlcNAc...) asparagine glycosylation is present at Asn90.

This sequence belongs to the Wnt family. In terms of processing, palmitoleoylation is required for efficient binding to frizzled receptors. Depalmitoleoylation leads to Wnt signaling pathway inhibition.

It is found in the secreted. The protein localises to the extracellular space. The protein resides in the extracellular matrix. Its function is as follows. Ligand for members of the frizzled family of seven transmembrane receptors. Probable developmental protein. May be a signaling molecule which affects the development of discrete regions of tissues. Is likely to signal over only few cell diameters. The sequence is that of Protein Wnt-7 (WNT-7) from Evasterias troschelii (Mottled sea star).